Here is a 183-residue protein sequence, read N- to C-terminus: Peptide deformylase-like (183 aa).

The active site involves E140.

The protein belongs to the polypeptide deformylase family.

This Rickettsia conorii (strain ATCC VR-613 / Malish 7) protein is Peptide deformylase-like.